The chain runs to 147 residues: Large ribosomal subunit protein uL15 (147 aa).

The segment at 1–57 (MRLEDLRPTPGSMKKRKRVGRGPGSGHGKTSGRGHKGQKARGTGKVHPWFEGGQTPL) is disordered. Over residues 30 to 44 (TSGRGHKGQKARGTG) the composition is skewed to basic residues.

This sequence belongs to the universal ribosomal protein uL15 family. As to quaternary structure, part of the 50S ribosomal subunit.

Binds to the 23S rRNA. In Thermotoga neapolitana (strain ATCC 49049 / DSM 4359 / NBRC 107923 / NS-E), this protein is Large ribosomal subunit protein uL15.